Reading from the N-terminus, the 473-residue chain is Proton-coupled folate transporter (473 aa).

Over residues 1 to 20 (MAAPSDPPTAATPPAPPPPA) the composition is skewed to pro residues. The segment at 1-21 (MAAPSDPPTAATPPAPPPPAR) is disordered. The Cytoplasmic portion of the chain corresponds to 1 to 29 (MAAPSDPPTAATPPAPPPPARRCLLAPSV). Residues 30-48 (EPLLFLATLALGLQVPLAT) traverse the membrane as a helical segment. At 49 to 90 (QYLWDRLGAERGYVGPNASSPHGCGNGSGAVDPLREEVEALV) the chain is on the extracellular side. N-linked (GlcNAc...) asparagine glycans are attached at residues N65 and N74. A disulfide bridge connects residues C72 and C306. A helical membrane pass occupies residues 91-116 (AHWNLCINLGGFFVGLFSVTLFGPWS). N98 contacts pemetrexed. Residues 117–120 (DSVG) lie on the Cytoplasmic side of the membrane. A helical transmembrane segment spans residues 121-143 (RRPVLVLPAVGMAVQAAVYLLVM). Residues 144–148 (YLRLH) lie on the Extracellular side of the membrane. A helical membrane pass occupies residues 149 to 162 (VAYLLLGRIISGLL). The Cytoplasmic segment spans residues 163 to 185 (GDYNLILAGCFASVADSSNQRTR). Positions 164 and 193 each coordinate H(+). Residues 186–211 (TFRVAILEACLGVAGMVASVGGGQWR) form a helical membrane-spanning segment. E193 contacts pemetrexed. Over 212–216 (KAEGY) the chain is Extracellular. A helical membrane pass occupies residues 217 to 235 (INPFWLVLAASLAAALYAA). Residues 236–274 (LCLQETVKQRRAAKLLTLQHYKAVYKLYTAPEDLSSRRK) are Cytoplasmic-facing. Residues 275–297 (LALYSLAFFLLVTVHFGTKDLYV) traverse the membrane as a helical segment. H289 serves as a coordination point for H(+). Residues 298 to 310 (LYELGSPLCWASD) are Extracellular-facing. The helical transmembrane segment at 311 to 333 (LIGYGSAASYLAYLSSLGGLRLL) threads the bilayer. Y323 serves as a coordination point for pemetrexed. Residues 334–339 (QLCLED) are Cytoplasmic-facing. Residues 340–359 (TWVAEIGLISNIAGLVVISL) form a helical membrane-spanning segment. The Extracellular segment spans residues 360–363 (ATTT). Residues 364–384 (PLMFTGYGIMFLSMAATPVIR) form a helical membrane-spanning segment. The Cytoplasmic portion of the chain corresponds to 385 to 396 (AKLSKLVGETEQ). Residues 397-422 (GALFASVACVEGLCSLVATGVFNSLY) form a helical membrane-spanning segment. Positions 407 and 411 each coordinate pemetrexed. Topologically, residues 423–430 (PSTLHFMR) are extracellular. The chain crosses the membrane as a helical span at residues 431–449 (GFPFLFGAILLLIPAAIMG). Residues 450–473 (WIEIQDSNLQYSHFSDASSSPADG) lie on the Cytoplasmic side of the membrane.

The protein belongs to the major facilitator superfamily. SLC46A family. In terms of assembly, monomer. As to expression, widely expressed, including brain, aorta, liver, kidney, spleen, small intestine, pancreas, ovary and testis.

It localises to the cell membrane. It is found in the apical cell membrane. The protein localises to the basolateral cell membrane. Its subcellular location is the endosome membrane. The protein resides in the cytoplasm. It catalyses the reaction folate(in) + H(+)(in) = folate(out) + H(+)(out). It carries out the reaction (6S)-5-methyl-5,6,7,8-tetrahydrofolate(in) + H(+)(in) = (6S)-5-methyl-5,6,7,8-tetrahydrofolate(out) + H(+)(out). The catalysed reaction is methotrexate(in) + H(+)(in) = methotrexate(out) + H(+)(out). The enzyme catalyses pemetrexed(in) + H(+)(in) = pemetrexed(out) + H(+)(out). Its function is as follows. Proton-coupled folate symporter that mediates folate absorption using an H(+) gradient as a driving force. Involved in the intestinal absorption of folates at the brush-border membrane of the proximal jejunum, and the transport from blood to cerebrospinal fluid across the choroid plexus. Functions at acidic pH via alternate outward- and inward-open conformation states. Protonation of residues in the outward open state primes the protein for transport. Binding of folate promotes breaking of salt bridge network and subsequent closure of the extracellular gate, leading to the inward-open state and release of protons and folate. Also able to transport antifolate drugs, such as methotrexate and pemetrexed. Also acts as a lower-affinity, pH-independent heme carrier protein and constitutes the main importer of heme in the intestine. Imports heme in the retina and retinal pigment epithelium, in neurons of the hippocampus, in hepatocytes and in the renal epithelial cells. This Gallus gallus (Chicken) protein is Proton-coupled folate transporter.